The chain runs to 308 residues: 1-acyl-sn-glycerol-3-phosphate acyltransferase (308 aa).

3 helical membrane-spanning segments follow: residues 65 to 85 (FLSM…LLPW), 124 to 144 (AIYI…WLIP), and 148 to 168 (VTIA…YVLA). The HXXXXD motif motif lies at 130–135 (HASLVD).

It belongs to the 1-acyl-sn-glycerol-3-phosphate acyltransferase family.

Its subcellular location is the membrane. The enzyme catalyses a 1-acyl-sn-glycero-3-phosphate + an acyl-CoA = a 1,2-diacyl-sn-glycero-3-phosphate + CoA. In terms of biological role, converts lysophosphatidic acid (LPA) into phosphatidic acid by incorporating acyl moiety at the 2 position. This enzyme shows a preference for medium-chain-length fatty acyl-coenzyme a substrates. The sequence is that of 1-acyl-sn-glycerol-3-phosphate acyltransferase from Cocos nucifera (Coconut palm).